An 830-amino-acid chain; its full sequence is Leucine--tRNA ligase (830 aa).

Residues 34–44 carry the 'HIGH' region motif; that stretch reads PYPSGNIHMGH. The 'KMSKS' region motif lies at 592–596; sequence KMSKS. Lys595 serves as a coordination point for ATP.

It belongs to the class-I aminoacyl-tRNA synthetase family.

It localises to the cytoplasm. It carries out the reaction tRNA(Leu) + L-leucine + ATP = L-leucyl-tRNA(Leu) + AMP + diphosphate. The polypeptide is Leucine--tRNA ligase (Ehrlichia ruminantium (strain Gardel)).